The chain runs to 278 residues: Ribosomal RNA small subunit methyltransferase A (278 aa).

The S-adenosyl-L-methionine site is built by asparagine 28, leucine 30, glycine 55, glutamate 77, aspartate 103, and asparagine 122.

The protein belongs to the class I-like SAM-binding methyltransferase superfamily. rRNA adenine N(6)-methyltransferase family. RsmA subfamily.

The protein resides in the cytoplasm. The enzyme catalyses adenosine(1518)/adenosine(1519) in 16S rRNA + 4 S-adenosyl-L-methionine = N(6)-dimethyladenosine(1518)/N(6)-dimethyladenosine(1519) in 16S rRNA + 4 S-adenosyl-L-homocysteine + 4 H(+). In terms of biological role, specifically dimethylates two adjacent adenosines (A1518 and A1519) in the loop of a conserved hairpin near the 3'-end of 16S rRNA in the 30S particle. May play a critical role in biogenesis of 30S subunits. In Cereibacter sphaeroides (strain ATCC 17025 / ATH 2.4.3) (Rhodobacter sphaeroides), this protein is Ribosomal RNA small subunit methyltransferase A.